Consider the following 62-residue polypeptide: Small ribosomal subunit protein eS27 (62 aa).

Zn(2+) is bound by residues C17, C20, C36, and C39. The C4-type zinc-finger motif lies at C17–C39.

Belongs to the eukaryotic ribosomal protein eS27 family. Part of the 30S ribosomal subunit. Zn(2+) serves as cofactor.

In Methanospirillum hungatei JF-1 (strain ATCC 27890 / DSM 864 / NBRC 100397 / JF-1), this protein is Small ribosomal subunit protein eS27.